A 173-amino-acid polypeptide reads, in one-letter code: Probable transcription termination protein NusA (173 aa).

Positions 31 to 97 constitute a KH domain; sequence DEKIVFVVKE…EDVWVKKFGN (67 aa). A compositionally biased stretch (basic and acidic residues) spans 147 to 162; it reads ADNRPKKDEIPEKAAE. The tract at residues 147–173 is disordered; that stretch reads ADNRPKKDEIPEKAAESSENVQAEENQ. Positions 163–173 are enriched in polar residues; that stretch reads SSENVQAEENQ.

The protein belongs to the NusA family.

The protein resides in the cytoplasm. Functionally, participates in transcription termination. This chain is Probable transcription termination protein NusA, found in Methanococcus vannielii (strain ATCC 35089 / DSM 1224 / JCM 13029 / OCM 148 / SB).